We begin with the raw amino-acid sequence, 282 residues long: Bifunctional protein FolD (282 aa).

Residues 164 to 166 (GRS) and Ser-189 contribute to the NADP(+) site.

Belongs to the tetrahydrofolate dehydrogenase/cyclohydrolase family. In terms of assembly, homodimer.

The catalysed reaction is (6R)-5,10-methylene-5,6,7,8-tetrahydrofolate + NADP(+) = (6R)-5,10-methenyltetrahydrofolate + NADPH. It catalyses the reaction (6R)-5,10-methenyltetrahydrofolate + H2O = (6R)-10-formyltetrahydrofolate + H(+). The protein operates within one-carbon metabolism; tetrahydrofolate interconversion. Functionally, catalyzes the oxidation of 5,10-methylenetetrahydrofolate to 5,10-methenyltetrahydrofolate and then the hydrolysis of 5,10-methenyltetrahydrofolate to 10-formyltetrahydrofolate. The polypeptide is Bifunctional protein FolD (Lactobacillus gasseri (strain ATCC 33323 / DSM 20243 / BCRC 14619 / CIP 102991 / JCM 1131 / KCTC 3163 / NCIMB 11718 / NCTC 13722 / AM63)).